A 503-amino-acid chain; its full sequence is 11-hydroxysugiol 20-monooxygenase (503 aa).

The helical transmembrane segment at 2-22 (QVLIVASLAFLAAWLVYSRWS) threads the bilayer. Residue Cys446 participates in heme binding.

It belongs to the cytochrome P450 family. Requires heme as cofactor. In terms of tissue distribution, highly expressed in roots.

The protein localises to the membrane. The enzyme catalyses 11-hydroxysugiol + reduced [NADPH--hemoprotein reductase] + O2 = 11,20-dihydroxysugiol + oxidized [NADPH--hemoprotein reductase] + H2O + H(+). It catalyses the reaction 11-hydroxyferruginol + reduced [NADPH--hemoprotein reductase] + O2 = 11,20-dihydroxyferruginol + oxidized [NADPH--hemoprotein reductase] + H2O + H(+). Its pathway is secondary metabolite biosynthesis; terpenoid biosynthesis. In terms of biological role, monooxygenase that oxidizes 11-hydroxysugiol to produce 11,20-dihydroxysugiol. Can oxidize 11-hydroxyferruginol to produce 11,20-dihydroxyferruginol. These products are intermediates in tanshinone biosynthesis. In Salvia miltiorrhiza (Chinese sage), this protein is 11-hydroxysugiol 20-monooxygenase.